The following is a 791-amino-acid chain: Phenylalanine--tRNA ligase beta subunit (791 aa).

The tRNA-binding domain occupies 39–149 (GDEIQNVVTG…SDTAIGKDIK (111 aa)). Residues 403 to 478 (IKERNLKVDS…RIYGYNNIPT (76 aa)) form the B5 domain. Mg(2+) contacts are provided by D456, D462, E465, and E466. Residues 698–791 (PKFPAVDRDM…LENNLGAELR (94 aa)) form the FDX-ACB domain.

This sequence belongs to the phenylalanyl-tRNA synthetase beta subunit family. Type 1 subfamily. As to quaternary structure, tetramer of two alpha and two beta subunits. Mg(2+) is required as a cofactor.

It localises to the cytoplasm. The catalysed reaction is tRNA(Phe) + L-phenylalanine + ATP = L-phenylalanyl-tRNA(Phe) + AMP + diphosphate + H(+). This is Phenylalanine--tRNA ligase beta subunit from Clostridium tetani (strain Massachusetts / E88).